Here is a 500-residue protein sequence, read N- to C-terminus: MTSTLQKNRAGAAFPFDNSYAGLPARFFAAQTPTAVAEPWLIKLNEPLAVELGLDVETLRRDGAAIFSGNLVPEGAEPLAMAYAGHQFGGFSPQLGDGRAILLGEVVDRSGRRYDIQLKGAGPTPFSRRGDGRAAIGPVLREYIISEAMFALGIPATRALAAVTTGEPVYREEVLPGAVFTRVAASHIRVGTFQFFAARGDTDGVRALADYVIDRHYPDLKDADNPYLSLYSAVSERQAALIARWLHVGFIHGVMNTDNMTVSGETIDFGPCAFMDNYDPATVFSSIDQHGRYAYANQPGIGQWNLARLGETLLPLIDEEPDGAVDKANAVIRAYGERFQAHWLAGMRGKIGLAGEEDGDLELVQALLSLMQAQGADFTLTFRRLSDLAGDAAAETAFAASFREPEACGPWLAQWRERLSRDPQTAAERATAMCRVNPAFIPRNHRVEQAIEAAVENGDFTLFEALLTVLAKPYEDQPGFAAYMEPPKPSERVLATFCGT.

ATP is bound by residues glycine 96, glycine 98, arginine 99, lysine 119, aspartate 131, glycine 132, arginine 182, and arginine 189. Aspartate 258 serves as the catalytic Proton acceptor. 2 residues coordinate Mg(2+): asparagine 259 and aspartate 268. Position 268 (aspartate 268) interacts with ATP.

This sequence belongs to the SELO family. Mg(2+) is required as a cofactor. The cofactor is Mn(2+).

The enzyme catalyses L-seryl-[protein] + ATP = 3-O-(5'-adenylyl)-L-seryl-[protein] + diphosphate. The catalysed reaction is L-threonyl-[protein] + ATP = 3-O-(5'-adenylyl)-L-threonyl-[protein] + diphosphate. It carries out the reaction L-tyrosyl-[protein] + ATP = O-(5'-adenylyl)-L-tyrosyl-[protein] + diphosphate. It catalyses the reaction L-histidyl-[protein] + UTP = N(tele)-(5'-uridylyl)-L-histidyl-[protein] + diphosphate. The enzyme catalyses L-seryl-[protein] + UTP = O-(5'-uridylyl)-L-seryl-[protein] + diphosphate. The catalysed reaction is L-tyrosyl-[protein] + UTP = O-(5'-uridylyl)-L-tyrosyl-[protein] + diphosphate. Nucleotidyltransferase involved in the post-translational modification of proteins. It can catalyze the addition of adenosine monophosphate (AMP) or uridine monophosphate (UMP) to a protein, resulting in modifications known as AMPylation and UMPylation. This Rhizobium leguminosarum bv. trifolii (strain WSM2304) protein is Protein nucleotidyltransferase YdiU.